The chain runs to 269 residues: Tryptophan synthase alpha chain (269 aa).

Residues Glu-49 and Asp-60 each act as proton acceptor in the active site.

The protein belongs to the TrpA family. As to quaternary structure, tetramer of two alpha and two beta chains.

It catalyses the reaction (1S,2R)-1-C-(indol-3-yl)glycerol 3-phosphate + L-serine = D-glyceraldehyde 3-phosphate + L-tryptophan + H2O. It participates in amino-acid biosynthesis; L-tryptophan biosynthesis; L-tryptophan from chorismate: step 5/5. In terms of biological role, the alpha subunit is responsible for the aldol cleavage of indoleglycerol phosphate to indole and glyceraldehyde 3-phosphate. The protein is Tryptophan synthase alpha chain of Enterobacter sp. (strain 638).